Reading from the N-terminus, the 3387-residue chain is MNQRKKVVRPPFNMLKRERNRVSTPQGLVKRFSTGLFSGKGPLRMVLAFITFLRVLSIPPTAGILKRWGQLKKNKAIKILIGFRKEIGRMLNILNGRKRSTMTLLCLIPTVMAFHLSTRDGEPLMIVAKHERGRPLLFKTTEGINKCTLIAMDLGEMCEDTVTYKCPLLVNTEPEDIDCWCNLTSTWVMYGTCTQSGERRREKRSVALTPHSGMGLETRAETWMSSEGAWKHAQRVESWILRNPGFALLAGFMAYMIGQTGIQRTVFFVLMMLVAPSYGMRCVGVGNRDFVEGVSGGAWVDLVLEHGGCVTTMAQGKPTLDFELTKTTAKEVALLRTYCIEASISNITTATRCPTQGEPYLKEEQDQQYICRRDVVDRGWGNGCGLFGKGGVVTCAKFSCSGKITGNLVQIENLEYTVVVTVHNGDTHAVGNDTSNHGVTATITPRSPSVEVKLPDYGELTLDCEPRSGIDFNEMILMEMKKKTWLVHKQWFLDLPLPWTAGADTSEVHWNYKERMVTFKVPHAKRQDVTVLGSQEGAMHSALAGATEVDSGDGNHMFAGHLKCKVRMEKLRIKGMSYTMCSGKFSIDKEMAETQHGTTVVKVKYEGAGAPCKVPIEIRDVNKEKVVGRVISSTPLAENTNSVTNIELEPPFGDSYIVIGVGNSALTLHWFRKGSSIGKMFESTYRGAKRMAILGETAWDFGSVGGLFTSLGKAVHQVFGSVYTTMFGGVSWMVRILIGFLVLWIGTNSRNTSMAMTCIAVGGITLFLGFTVQADMGCVVSWSGKELKCGSGIFVADNVHTWTEQYKFQPESPARLASAILNAHKDGVCGIRSTTRLENVMWKQITNELNYVLWEGGHDLTVVAGDVKGVLTKGKRALTPPVNDLKYSWKTWGKAKIFTPEARNSTFLIDGPDTSECPNERRAWNFLEVEDYGFGMFTTNIWMKFREGSSEVCDHRLMSAAIKDQKAVHADMGYWIESSKNQTWQIEKASLIEVKTCLWPKTHTLWSNGVLESQMLIPKSYAGPFSQHNYRQGYATQTVGPWHLGKLEIDFGECPGTTVTIQEDCDHRGPSLRTTTASGKLVTQWCCRSCTMPPLRFLGEDGCWYGMEIRPLSEKEENMVKSQVTAGQGTSETFSMGLLCLTLFMEECLRRRVTRKHMILVVVITLCAIILGGLTWMDLLRALIMLGDTMSGRIGGQVHLAIMAVFKMSPGYVLGVFLRKLTSRETALMVIGMAMTTVLSIPHDLMELIDGISLGLILLKIVTQFDNTQVGTLALSLTFIRSTMPLVMAWRTIMAVLFVVTLIPLCRTSCLQKQSHWVEITALILGAQALPVYLMTLMKGASRRSWPLNEGIMAVGLVSLLGSALLKNDVPLAGPMVAGGLLLAAYVMSGSSADLSLEKAANVQWDEMADITGSSPIIEVKQDEDGSFSIRDVEETNMITLLVKLALITVSGLYPLAIPVTMTLWYMWQVKTQRSGALWDVPSPAATQKAALSEGVYRIMQRGLFGKTQVGVGIHIEGVFHTMWHVTRGSVICHETGRLEPSWADVRNDMISYGGGWRLGDKWDKEEDVQVLAIEPGKNPKHVQTKPGLFKTLTGEIGAVTLDFKPGTSGSPIINRKGKVIGLYGNGVVTKSGDYVSAITQAERIGEPDYEVDEDIFRKKRLTIMDLHPGAGKTKRILPSIVREALKRRLRTLILAPTRVVAAEMEEALRGLPIRYQTPAVKSEHTGREIVDLMCHATFTTRLLSSTRVPNYNLIVMDEAHFTDPSSVAARGYISTRVEMGEAAAIFMTATPPGTTDPFPQSNSPIEDIEREIPERSWNTGFDWITDYQGKTVWFVPSIKAGNDIANCLRKSGKKVIQLSRKTFDTEYPKTKLTDWDFVVTTDISEMGANFRAGRVIDPRRCLKPVILPDGPERVILAGPIPVTPASAAQRRGRIGRNPAQEDDQYVFSGDPLKNDEDHAHWTEAKMLLDNIYTPEGIIPTLFGPEREKTQAIDGEFRLRGEQRKTFVELMRRGDLPVWLSYKVASAGISYKDREWCFTGERNNQILEENMEVEIWTREGEKKKLRPKWLDARVYADPMALKDFKEFASGRKSITLDILTEIASLPTYLSSRAKLALDNIVMLHTTEKGGRAYQHALNELPESLETLMLVALLGAMTAGTFLFFMQGKGIGKLSMGLITIAVASGLLWVAELQPQWIAASIILEFFLMVLLIPEPEKQRTPQDNQLIYVILTILTIIGLIAANEMGLIEKTKTDFGFYQVKTETTILDVDLRPASAWTLYAVATTILTPMLRHTIENTSANLSLAAIANQAAVLMGLGKGWPLHRVDLGVPLLAMGCYSQVNPTTLTASLVMLLVHYAIIGPGLQAKATREAQKRTAAGIMKNPTVDGITVIDLEPISYDPKFEKQLGQVMLLVLCAGQLLLMRTTWAFCEVLTLATGPILTLWEGNPGRFWNTTIAVSTANIFRGSYLAGAGLAFSLIKNAQTPRRGTGTTGETLGEKWKRQLNSLDRKEFEEYKRSGIIEVDRTEAKSALKDGSKIKHAVSRGSSKIRWIVERGMVKPKGKVVDLGCGRGGWSYYMATLKNVTEVRGFTKGGPGHEEPIPMATYGWNLVKLHSGVDVFYKPTEQVDTLLCDIGESSSNPTIEEGRTLRVLKMVEPWLSSKPEFCIKVLNPYMPTVIEELEKLQRKHGGNLVRCPLSRNSTHEMYWVSGASGNIVSSVNTTSKMLLNRFTTRHRKPTYEKDVDLGAGTRSVSTETEKPDMTIIGRRLQRLQEEHKETWHYDQENPYRTWAYHGSYEAPSTGSASSMVNGVVKLLTKPWDVIPMVTQLAMTDTTPFGQQRVFKEKVDTRTPQPKPGTRMVMTTTANWLWTLLGKKKNPRLCTREEFISKVRSNAAIGAVFQEEQGWTSASEAVNDSRFWELVDKERALHQEGRCESCVYNMMGKREKKLGEFGRAKGSRAIWYMWLGARFLEFEALGFLNEDHWFGRENSWSGVEGEGLHRLGYILEDIDKKDGDLMYADDTAGWDTRITEDDLQNEELITEQMAPHHKILAKAIFKLTYQNKVVKVLRPTPRGAVMDIISRKDQRGSGQVGTYGLNTFTNMEVQLIRQMEAEGVITQDDMQNPKGLKERVEKWLKECGVDRLKRMAISGDDCVVKPLDERFSTSLLFLNDMGKVRKDIPQWEPSKGWKNWQEVPFCSHHFHKIFMKDGRSLVVPCRNQDELIGRARISQGAGWSLRETACLGKAYAQMWSLMYFHRRDLRLASMAICSAVPTEWFPTSRTTWSIHAHHQWMTTEDMLKVWNRVWIEDNPNMTDKTPVHSWEDVPYLGKREDLWCGSLIGLSSRATWAKNIHTAITQVRNLIGKEEYVDYMPVMKRYSAPSESEGVL.

Residues 1-100 (MNQRKKVVRP…LNILNGRKRS (100 aa)) are Cytoplasmic-facing. Residues 36 to 71 (LFSGKGPLRMVLAFITFLRVLSIPPTAGILKRWGQL) form a hydrophobic; homodimerization of capsid protein C region. Residues 100-113 (STMTLLCLIPTVMA) constitute a propeptide, ER anchor for the capsid protein C, removed in mature form by serine protease NS3. A helical transmembrane segment spans residues 101–117 (TMTLLCLIPTVMAFHLS). Residues 118-237 (TRDGEPLMIV…GAWKHAQRVE (120 aa)) are Extracellular-facing. N182 is a glycosylation site (N-linked (GlcNAc...) asparagine; by host). A helical transmembrane segment spans residues 238–258 (SWILRNPGFALLAGFMAYMIG). Residues 259 to 265 (QTGIQRT) lie on the Cytoplasmic side of the membrane. Residues 266-279 (VFFVLMMLVAPSYG) traverse the membrane as a helical segment. Over 280 to 723 (MRCVGVGNRD…AVHQVFGSVY (444 aa)) the chain is Extracellular. 4 cysteine pairs are disulfide-bonded: C282/C309, C339/C400, C353/C384, and C371/C395. Residue N346 is glycosylated (N-linked (GlcNAc...) asparagine; by host). Residues 377-390 (DRGWGNGCGLFGKG) are fusion peptide. N432 carries an N-linked (GlcNAc...) asparagine; by host glycan. Cystine bridges form between C464–C564 and C581–C612. A helical membrane pass occupies residues 724 to 744 (TTMFGGVSWMVRILIGFLVLW). Residues 745-750 (IGTNSR) are Cytoplasmic-facing. The helical transmembrane segment at 751-771 (NTSMAMTCIAVGGITLFLGFT) threads the bilayer. The Extracellular portion of the chain corresponds to 772-1194 (VQADMGCVVS…MLGDTMSGRI (423 aa)). 6 cysteine pairs are disulfide-bonded: C778-C789, C829-C917, C953-C997, C1054-C1103, C1065-C1087, and C1086-C1090. 2 N-linked (GlcNAc...) asparagine; by host glycosylation sites follow: N904 and N981. The chain crosses the membrane as a helical span at residues 1195–1218 (GGQVHLAIMAVFKMSPGYVLGVFL). Over 1219–1224 (RKLTSR) the chain is Lumenal. A helical transmembrane segment spans residues 1225 to 1243 (ETALMVIGMAMTTVLSIPH). The Cytoplasmic portion of the chain corresponds to 1244 to 1267 (DLMELIDGISLGLILLKIVTQFDN). The chain crosses the membrane as a helical span at residues 1268-1288 (TQVGTLALSLTFIRSTMPLVM). A1289 is a topological domain (lumenal). Residues 1290–1308 (WRTIMAVLFVVTLIPLCRT) traverse the membrane as a helical segment. Topologically, residues 1309–1316 (SCLQKQSH) are lumenal. The helical transmembrane segment at 1317-1337 (WVEITALILGAQALPVYLMTL) threads the bilayer. The Cytoplasmic portion of the chain corresponds to 1338 to 1345 (MKGASRRS). Residues 1346–1366 (WPLNEGIMAVGLVSLLGSALL) traverse the membrane as a helical segment. At 1367-1369 (KND) the chain is on the lumenal side. Residues 1370–1390 (VPLAGPMVAGGLLLAAYVMSG) traverse the membrane as a helical segment. The Cytoplasmic segment spans residues 1391–1437 (SSADLSLEKAANVQWDEMADITGSSPIIEVKQDEDGSFSIRDVEETN). Residues 1397 to 1436 (LEKAANVQWDEMADITGSSPIIEVKQDEDGSFSIRDVEET) form an interacts with and activates NS3 protease region. The segment at residues 1438–1458 (MITLLVKLALITVSGLYPLAI) is an intramembrane region (helical). The Cytoplasmic segment spans residues 1459 to 2143 (PVTMTLWYMW…QHALNELPES (685 aa)). The Peptidase S7 domain maps to 1475–1652 (SGALWDVPSP…ERIGEPDYEV (178 aa)). Catalysis depends on charge relay system; for serine protease NS3 activity residues H1525, D1549, and S1609. In terms of domain architecture, Helicase ATP-binding spans 1654–1810 (EDIFRKKRLT…QSNSPIEDIE (157 aa)). The segment at 1658 to 1661 (RKKR) is important for RNA-binding. Position 1667–1674 (1667–1674 (LHPGAGKT)) interacts with ATP. The short motif at 1758 to 1761 (DEAH) is the DEAH box element. The 168-residue stretch at 1820-1987 (TGFDWITDYQ…IIPTLFGPER (168 aa)) folds into the Helicase C-terminal domain. K1862 bears the N6-acetyllysine; by host mark. Residues 2144-2164 (LETLMLVALLGAMTAGTFLFF) form a helical membrane-spanning segment. At 2165 to 2169 (MQGKG) the chain is on the lumenal side. Positions 2170-2190 (IGKLSMGLITIAVASGLLWVA) form an intramembrane region, helical. A topological domain (lumenal) is located at residue E2191. The chain crosses the membrane as a helical span at residues 2192–2212 (LQPQWIAASIILEFFLMVLLI). At 2213 to 2225 (PEPEKQRTPQDNQ) the chain is on the cytoplasmic side. The chain crosses the membrane as a helical span at residues 2226–2246 (LIYVILTILTIIGLIAANEMG). Topologically, residues 2247–2270 (LIEKTKTDFGFYQVKTETTILDVD) are lumenal. Residues 2271-2291 (LRPASAWTLYAVATTILTPML) constitute an intramembrane region (helical). The Lumenal segment spans residues 2292–2301 (RHTIENTSAN). N-linked (GlcNAc...) asparagine; by host glycosylation is found at N2297 and N2301. Residues 2302–2322 (LSLAAIANQAAVLMGLGKGWP) constitute an intramembrane region (helical). The Lumenal segment spans residues 2323–2343 (LHRVDLGVPLLAMGCYSQVNP). Residues 2344–2364 (TTLTASLVMLLVHYAIIGPGL) form a helical membrane-spanning segment. The Cytoplasmic segment spans residues 2365 to 2409 (QAKATREAQKRTAAGIMKNPTVDGITVIDLEPISYDPKFEKQLGQ). The chain crosses the membrane as a helical span at residues 2410-2430 (VMLLVLCAGQLLLMRTTWAFC). Residues 2431–2455 (EVLTLATGPILTLWEGNPGRFWNTT) lie on the Lumenal side of the membrane. N-linked (GlcNAc...) asparagine; by host glycosylation is present at N2453. The chain crosses the membrane as a helical span at residues 2456–2476 (IAVSTANIFRGSYLAGAGLAF). At 2477–3387 (SLIKNAQTPR…SAPSESEGVL (911 aa)) the chain is on the cytoplasmic side. The 263-residue stretch at 2489–2751 (TGTTGETLGE…DVDLGAGTRS (263 aa)) folds into the mRNA cap 0-1 NS5-type MT domain. S2543 lines the S-adenosyl-L-methionine pocket. S2543 bears the Phosphoserine mark. K2548 serves as the catalytic For 2'-O-MTase activity. The SUMO-interacting motif signature appears at 2564 to 2567 (VVDL). S-adenosyl-L-methionine-binding residues include G2573, W2574, T2591, K2592, D2618, and V2619. D2633 (for 2'-O-MTase activity) is an active-site residue. Residue I2634 participates in S-adenosyl-L-methionine binding. Residues K2668 and E2704 each act as for 2'-O-MTase activity in the active site. Y2706 lines the S-adenosyl-L-methionine pocket. Residues E2925, H2929, C2934, and C2937 each coordinate Zn(2+). The RdRp catalytic domain maps to 3016 to 3166 (LMYADDTAGW…PLDERFSTSL (151 aa)). The Zn(2+) site is built by H3200, C3216, and C3335.

In the N-terminal section; belongs to the class I-like SAM-binding methyltransferase superfamily. mRNA cap 0-1 NS5-type methyltransferase family. As to quaternary structure, homodimer. Interacts (via N-terminus) with host EXOC1 (via C-terminus); this interaction results in EXOC1 degradation through the proteasome degradation pathway. Forms heterodimers with envelope protein E in the endoplasmic reticulum and Golgi. In terms of assembly, homodimer; in the endoplasmic reticulum and Golgi. Interacts with protein prM. Interacts with non-structural protein 1. As to quaternary structure, homodimer; Homohexamer when secreted. Interacts with envelope protein E. Interacts (via N-terminus) with serine protease NS3. In terms of assembly, forms a heterodimer with serine protease NS3. May form homooligomers. As to quaternary structure, forms a heterodimer with NS2B. Interacts with NS4B. Interacts with unphosphorylated RNA-directed RNA polymerase NS5; this interaction stimulates RNA-directed RNA polymerase NS5 guanylyltransferase activity. Interacts with host SHFL. Interacts with host MAVS; this interaction inhibits the synthesis of IFN-beta. Interacts with host SHFL. Interacts with host AUP1; the interaction occurs in the presence of Dengue virus NS4B and induces lipophagy which facilitates production of virus progeny particles. In terms of assembly, interacts with serine protease NS3. As to quaternary structure, homodimer. Interacts with host STAT2; this interaction inhibits the phosphorylation of the latter, and, when all viral proteins are present (polyprotein), targets STAT2 for degradation. Interacts with serine protease NS3. Interacts with host PAF1 complex; the interaction may prevent the recruitment of the PAF1 complex to interferon-responsive genes, and thus reduces the immune response. Post-translationally, specific enzymatic cleavages in vivo yield mature proteins. Cleavages in the lumen of endoplasmic reticulum are performed by host signal peptidase, whereas cleavages in the cytoplasmic side are performed by serine protease NS3. Signal cleavage at the 2K-4B site requires a prior NS3 protease-mediated cleavage at the 4A-2K site. Cleaved in post-Golgi vesicles by a host furin, releasing the mature small envelope protein M, and peptide pr. This cleavage is incomplete as up to 30% of viral particles still carry uncleaved prM. In terms of processing, N-glycosylated. Post-translationally, N-glycosylated. The excreted form is glycosylated and this is required for efficient secretion of the protein from infected cells. Acetylated by host KAT5. Acetylation modulates NS3 RNA-binding and unwinding activities and plays an important positive role for viral replication. In terms of processing, sumoylation of RNA-directed RNA polymerase NS5 increases NS5 protein stability allowing proper viral RNA replication. Post-translationally, phosphorylated on serines residues. This phosphorylation may trigger NS5 nuclear localization.

It is found in the virion. It localises to the host nucleus. The protein localises to the host cytoplasm. The protein resides in the host perinuclear region. Its subcellular location is the secreted. It is found in the virion membrane. It localises to the host endoplasmic reticulum membrane. The protein localises to the host mitochondrion. The catalysed reaction is Selective hydrolysis of -Xaa-Xaa-|-Yaa- bonds in which each of the Xaa can be either Arg or Lys and Yaa can be either Ser or Ala.. It catalyses the reaction RNA(n) + a ribonucleoside 5'-triphosphate = RNA(n+1) + diphosphate. It carries out the reaction a ribonucleoside 5'-triphosphate + H2O = a ribonucleoside 5'-diphosphate + phosphate + H(+). The enzyme catalyses ATP + H2O = ADP + phosphate + H(+). The catalysed reaction is a 5'-end (5'-triphosphoguanosine)-ribonucleoside in mRNA + S-adenosyl-L-methionine = a 5'-end (N(7)-methyl 5'-triphosphoguanosine)-ribonucleoside in mRNA + S-adenosyl-L-homocysteine. It catalyses the reaction a 5'-end (N(7)-methyl 5'-triphosphoguanosine)-ribonucleoside in mRNA + S-adenosyl-L-methionine = a 5'-end (N(7)-methyl 5'-triphosphoguanosine)-(2'-O-methyl-ribonucleoside) in mRNA + S-adenosyl-L-homocysteine + H(+). In terms of biological role, plays a role in virus budding by binding to the cell membrane and gathering the viral RNA into a nucleocapsid that forms the core of a mature virus particle. During virus entry, may induce genome penetration into the host cytoplasm after hemifusion induced by the surface proteins. Can migrate to the cell nucleus where it modulates host functions. Overcomes the anti-viral effects of host EXOC1 by sequestering and degrading the latter through the proteasome degradation pathway. Functionally, inhibits RNA silencing by interfering with host Dicer. Its function is as follows. Prevents premature fusion activity of envelope proteins in trans-Golgi by binding to envelope protein E at pH6.0. After virion release in extracellular space, gets dissociated from E dimers. Acts as a chaperone for envelope protein E during intracellular virion assembly by masking and inactivating envelope protein E fusion peptide. prM is the only viral peptide matured by host furin in the trans-Golgi network probably to avoid catastrophic activation of the viral fusion activity in acidic Golgi compartment prior to virion release. prM-E cleavage is inefficient, and many virions are only partially matured. These uncleaved prM would play a role in immune evasion. In terms of biological role, may play a role in virus budding. Exerts cytotoxic effects by activating a mitochondrial apoptotic pathway through M ectodomain. May display a viroporin activity. Functionally, binds to host cell surface receptor and mediates fusion between viral and cellular membranes. Envelope protein is synthesized in the endoplasmic reticulum in the form of heterodimer with protein prM. They play a role in virion budding in the ER, and the newly formed immature particle is covered with 60 spikes composed of heterodimer between precursor prM and envelope protein E. The virion is transported to the Golgi apparatus where the low pH causes dissociation of PrM-E heterodimers and formation of E homodimers. prM-E cleavage is inefficient, and many virions are only partially matured. These uncleaved prM would play a role in immune evasion. Its function is as follows. Involved in immune evasion, pathogenesis and viral replication. Once cleaved off the polyprotein, is targeted to three destinations: the viral replication cycle, the plasma membrane and the extracellular compartment. Essential for viral replication. Required for formation of the replication complex and recruitment of other non-structural proteins to the ER-derived membrane structures. Excreted as a hexameric lipoparticle that plays a role against host immune response. Antagonizing the complement function. Binds to the host macrophages and dendritic cells. Inhibits signal transduction originating from Toll-like receptor 3 (TLR3). Disrupts the host endothelial glycocalyx layer of host pulmonary microvascular endothelial cells, inducing degradation of sialic acid and shedding of heparan sulfate proteoglycans. NS1 induces expression of sialidases, heparanase, and activates cathepsin L, which activates heparanase via enzymatic cleavage. These effects are probably linked to the endothelial hyperpermeability observed in severe dengue disease. In terms of biological role, component of the viral RNA replication complex that functions in virion assembly and antagonizes the host immune response. Functionally, required cofactor for the serine protease function of NS3. May have membrane-destabilizing activity and form viroporins. Its function is as follows. Displays three enzymatic activities: serine protease, NTPase and RNA helicase. NS3 serine protease, in association with NS2B, performs its autocleavage and cleaves the polyprotein at dibasic sites in the cytoplasm: C-prM, NS2A-NS2B, NS2B-NS3, NS3-NS4A, NS4A-2K and NS4B-NS5. NS3 RNA helicase binds RNA and unwinds dsRNA in the 3' to 5' direction. Regulates the ATPase activity of the NS3 helicase activity. NS4A allows NS3 helicase to conserve energy during unwinding. Plays a role in the inhibition of the host innate immune response. Interacts with host MAVS and thereby prevents the interaction between RIGI and MAVS. In turn, IFN-beta production is impaired. Interacts with host AUP1 which mediates induction of lipophagy in host cells and facilitates production of virus progeny particles. In terms of biological role, functions as a signal peptide for NS4B and is required for the interferon antagonism activity of the latter. Functionally, induces the formation of ER-derived membrane vesicles where the viral replication takes place. Inhibits interferon (IFN)-induced host STAT1 phosphorylation and nuclear translocation, thereby preventing the establishment of cellular antiviral state by blocking the IFN-alpha/beta pathway. Its function is as follows. Replicates the viral (+) and (-) RNA genome, and performs the capping of genomes in the cytoplasm. NS5 methylates viral RNA cap at guanine N-7 and ribose 2'-O positions. Besides its role in RNA genome replication, also prevents the establishment of cellular antiviral state by blocking the interferon-alpha/beta (IFN-alpha/beta) signaling pathway. Inhibits host TYK2 and STAT2 phosphorylation, thereby preventing activation of JAK-STAT signaling pathway. May reduce immune responses by preventing the recruitment of the host PAF1 complex to interferon-responsive genes. The polypeptide is Genome polyprotein (Dengue virus type 4 (strain Singapore/8976/1995) (DENV-4)).